A 140-amino-acid chain; its full sequence is Protein BIC1 (140 aa).

Polar residues predominate over residues 1-10; the sequence is MMNIDDTTSP. Residues 1-71 are disordered; that stretch reads MMNIDDTTSP…RVDTGRERLK (71 aa). Residues 42-68 are compositionally biased toward basic and acidic residues; it reads ADKKDLALLEEKPKQSQEEDRVDTGRE.

As to quaternary structure, interacts with CRY2 in both darkness and light.

The protein localises to the nucleus. In terms of biological role, regulates the blue-light dependent dimerization of CRY2 and formation of photobodies. Interacts with photoexited CRY2 to inhibit its activity. Inhibits CRY phosphorylation. The polypeptide is Protein BIC1 (Arabidopsis thaliana (Mouse-ear cress)).